Consider the following 642-residue polypeptide: Chaperone protein HtpG (642 aa).

The tract at residues 1–348 is a; substrate-binding; it reads MSTKIEQLEF…AQDLSLNVSR (348 aa). Residues 349 to 564 form a b region; it reads EILQQDRQIR…AFSMSPALER (216 aa). A c region spans residues 565-642; sequence MYRASGQPVP…MLANRLARTV (78 aa).

It belongs to the heat shock protein 90 family. As to quaternary structure, homodimer.

It localises to the cytoplasm. In terms of biological role, molecular chaperone. Has ATPase activity. This is Chaperone protein HtpG from Rhodococcus jostii (strain RHA1).